Here is a 1586-residue protein sequence, read N- to C-terminus: Zinc finger protein GLI2 (1586 aa).

The span at 1-10 (METSASATAS) shows a compositional bias: polar residues. The disordered stretch occupies residues 1 to 22 (METSASATASEKQEAKSGILEA). Val50 is covalently cross-linked (Glycyl lysine isopeptide (Lys-Gly) (interchain with G-Cter in SUMO2)). Ser149, Ser234, Ser236, and Ser242 each carry phosphoserine. Positions 342-367 (SSSSNCLSDTNQNKQSSESAVSSTVN) are enriched in polar residues. The tract at residues 342–389 (SSSSNCLSDTNQNKQSSESAVSSTVNPVAIHKRSKVKTEPEGLRPASP) is disordered. Ser388 bears the Phosphoserine; by DYRK2 mark. The C2H2-type 1 zinc finger occupies 437–464 (TNCHWEDCTKEYDTQEQLVHHINNEHIH). The segment at 475 to 497 (QACTREQKPFKAQYMLVVHMRRH) adopts a C2H2-type 2; degenerate zinc-finger fold. 3 consecutive C2H2-type zinc fingers follow at residues 503–527 (HKCT…LRSH), 533–558 (YVCE…NRTH), and 564–589 (YICK…KTVH). Disordered regions lie at residues 577 to 636 (DPSS…TSQA) and 650 to 716 (SSGL…SAGG). Residues 589 to 605 (HGPDAHVTKKQRNDVHL) show a composition bias toward basic and acidic residues. The segment covering 654–674 (CQSSPGAQSSCSSEPSPLGSA) has biased composition (low complexity). Thr725 carries the phosphothreonine modification. 5 disordered regions span residues 742 to 879 (DSCS…SGLL), 925 to 1030 (RTLP…RPPS), 1182 to 1215 (QYPG…PSQG), 1421 to 1441 (MGNM…GAPD), and 1469 to 1498 (MRSQ…QVSS). Lys757 carries the N6-acetyllysine; by EP300 modification. Positions 791–802 (LSASEVTMLSQL) are enriched in polar residues. Composition is skewed to low complexity over residues 809-824 (STST…RRSS) and 947-961 (GHGH…PHEA). Residues 968 to 977 (RASDPVRRPD) show a composition bias toward basic and acidic residues. Ser1011 is modified (phosphoserine; by DYRK2). The segment covering 1469–1485 (MRSQPPQPQACQDSIQP) has biased composition (polar residues).

This sequence belongs to the GLI C2H2-type zinc-finger protein family. In terms of assembly, interaction with ZIC1 and ZIC2. Interacts with STK36. Interacts with SUFU; this inhibits transcriptional activation mediated by GLI2. Interacts (via C-terminal internal region) with FOXC1 (via N-terminus); this interaction is direct and increases GLI2 DNA-binding and transcriptional activity through a smoothened (SMO)-independent Hedgehog (Hh) signaling pathway. Phosphorylated in vitro by ULK3. Phosphorylated by DYRK2; this inhibits GLI2 transcription factor activity and promotes proteasomal degradation of GLI2. In terms of processing, acetylation at Lys-757 inhibits Hh target gene expression, probably by impeding entry into chromatin thus preventing promoter occupancy. As to expression, expressed in breast cancers (at protein level). Isoform 1 and isoform 4 are expressed in HTLV-1-infected T-cell lines (at protein level). Isoform 1 and isoform 2 are strongly expressed in HTLV-1-infected T-cell lines. Isoform 3 and isoform 4 are weakly expressed in HTLV-1-infected T-cell lines.

Its subcellular location is the nucleus. It localises to the cytoplasm. The protein localises to the cell projection. The protein resides in the cilium. Functionally, functions as a transcription regulator in the hedgehog (Hh) pathway. Functions as a transcriptional activator. May also function as transcriptional repressor. Requires STK36 for full transcriptional activator activity. Required for normal embryonic development. Its function is as follows. Involved in the smoothened (SHH) signaling pathway. In terms of biological role, acts as a transcriptional activator in T-cell leukemia virus type 1 (HTLV-1)-infected cells in a Tax-dependent manner. Binds to the DNA sequence 5'-GAACCACCCA-3' which is part of the Tax-responsive element (TRE-2S) regulatory element that augments the Tax-dependent enhancer of HTLV-1. (Microbial infection) Acts as a transcriptional activators in T-cell leukemia virus type 1 (HTLV-1)-infected cells in a Tax-dependent manner. Binds to the DNA sequence 5'-GAACCACCCA-3' which is part of the Tax-responsive element (TRE-2S) regulatory element that augments the Tax-dependent enhancer of HTLV-1. Functionally, acts as a transcriptional repressor. In Homo sapiens (Human), this protein is Zinc finger protein GLI2.